A 357-amino-acid polypeptide reads, in one-letter code: Peptide chain release factor 1 (357 aa).

The residue at position 234 (glutamine 234) is an N5-methylglutamine.

Belongs to the prokaryotic/mitochondrial release factor family. Methylated by PrmC. Methylation increases the termination efficiency of RF1.

The protein localises to the cytoplasm. Peptide chain release factor 1 directs the termination of translation in response to the peptide chain termination codons UAG and UAA. The sequence is that of Peptide chain release factor 1 from Nocardioides sp. (strain ATCC BAA-499 / JS614).